The sequence spans 413 residues: 2,3-bisphosphoglycerate-independent phosphoglycerate mutase (413 aa).

This sequence belongs to the BPG-independent phosphoglycerate mutase family. A-PGAM subfamily.

The enzyme catalyses (2R)-2-phosphoglycerate = (2R)-3-phosphoglycerate. The protein operates within carbohydrate degradation; glycolysis; pyruvate from D-glyceraldehyde 3-phosphate: step 3/5. In terms of biological role, catalyzes the interconversion of 2-phosphoglycerate and 3-phosphoglycerate. This is 2,3-bisphosphoglycerate-independent phosphoglycerate mutase from Sulfurisphaera tokodaii (strain DSM 16993 / JCM 10545 / NBRC 100140 / 7) (Sulfolobus tokodaii).